The sequence spans 142 residues: uncharacterized protein (142 aa).

This is an uncharacterized protein from Gallid herpesvirus 2 (strain GA) (GaHV-2).